Consider the following 344-residue polypeptide: L-rhamnose-proton symporter (344 aa).

The next 10 membrane-spanning stretches (helical) occupy residues 4–24 (PILLGIFWHFIGAASAACFYA), 38–58 (WSLGGFFSWIILPWSISWWLL), 68–88 (FDMATLLPIFLFGAMWGIGNI), 101–121 (MGIGIAIGVTLIIGTLMTPVL), 137–157 (TLLGVLVAVIGVAIVSYAGLL), 175–195 (LILAVMCGIFSAGMSFAMDAA), 214–234 (LPSYVVIMGGGAIVNLGFCFI), 255–275 (LIANALFAILGGVMWYLQFFF), 290–310 (ISWMLHMSFYVLCGGIVGLLF), and 324–344 (LVLGCVVIILAANIVGLGMAV).

The protein belongs to the L-rhamnose transporter (TC 2.A.7.6) family.

It is found in the cell inner membrane. The catalysed reaction is L-rhamnopyranose(in) + H(+)(in) = L-rhamnopyranose(out) + H(+)(out). Its function is as follows. Uptake of L-rhamnose across the cytoplasmic membrane with the concomitant transport of protons into the cell (symport system). The protein is L-rhamnose-proton symporter of Pectobacterium atrosepticum (strain SCRI 1043 / ATCC BAA-672) (Erwinia carotovora subsp. atroseptica).